The chain runs to 153 residues: Satratoxin biosynthesis SC2 cluster transcription factor SAT15 (153 aa).

It is found in the nucleus. Transcriptional regulator that may regulate the expression of the satratoxin biosynthesis SC2 cluster, one of the 3 clusters involved in the biosynthesis of satratoxins, trichothecene mycotoxins that are associated with human food poisonings. The chain is Satratoxin biosynthesis SC2 cluster transcription factor SAT15 from Stachybotrys chartarum (strain CBS 109288 / IBT 7711) (Toxic black mold).